The chain runs to 475 residues: Ankyrin repeat, SAM and basic leucine zipper domain-containing protein 1 (475 aa).

Residues 1 to 25 (MAAGALRGLPVAGGGESSESEDDGW) form a disordered region. Phosphoserine is present on residues Ser17, Ser18, and Ser20. ANK repeat units lie at residues 45 to 74 (EKKEKFKKAMTIGDVSLVQELLDSGISVDS), 78 to 107 (YGWTPLMYAASVANAELVRVLLDRGANASF), 110 to 144 (DKQTILITACSAHGSEEQILKCVELLLSRNADPNV), 148 to 177 (RLMTPIMYAARDGHTQVVALLVAHGAEVNT), 181 to 210 (NGYTALTWAARQGHKNIVLKLLELGANKML), and 214 to 243 (DGKMPSEIAKRNKHHEIFNLLSFTLNPLEG). Residues 272-334 (SYTAFGDLEV…KILAALKELQ (63 aa)) form the SAM domain.

Interacts with DDX4, PIWIL1, RANBP9 and TDRD1.

It localises to the cytoplasm. Plays a central role during spermatogenesis by repressing transposable elements and preventing their mobilization, which is essential for the germline integrity. Acts via the piRNA metabolic process, which mediates the repression of transposable elements during meiosis by forming complexes composed of piRNAs and Piwi proteins and governs the methylation and subsequent repression of transposons. Its association with pi-bodies suggests a participation in the primary piRNAs metabolic process. Required prior to the pachytene stage to facilitate the production of multiple types of piRNAs, including those associated with repeats involved in the regulation of retrotransposons. May act by mediating protein-protein interactions during germ cell maturation. The polypeptide is Ankyrin repeat, SAM and basic leucine zipper domain-containing protein 1 (ASZ1) (Chlorocebus aethiops (Green monkey)).